A 143-amino-acid chain; its full sequence is Large ribosomal subunit protein uL13 (143 aa).

It belongs to the universal ribosomal protein uL13 family. In terms of assembly, part of the 50S ribosomal subunit.

Functionally, this protein is one of the early assembly proteins of the 50S ribosomal subunit, although it is not seen to bind rRNA by itself. It is important during the early stages of 50S assembly. The protein is Large ribosomal subunit protein uL13 of Neisseria meningitidis serogroup C (strain 053442).